A 166-amino-acid chain; its full sequence is KH homology domain-containing protein 1A (166 aa).

In terms of domain architecture, KH; atypical spans 19 to 78 (PLVFDMEEDKEDYIFGPHDEYLHTLEVHSNTLIQLERWFTPTGQTRVTVVGPLKARLWVM).

It belongs to the KHDC1 family.

The protein resides in the cytoplasm. Has pro-apoptotic activity. The sequence is that of KH homology domain-containing protein 1A (Khdc1a) from Mus musculus (Mouse).